Here is a 633-residue protein sequence, read N- to C-terminus: Extracellular metalloproteinase 3 (633 aa).

The signal sequence occupies residues 1–18 (MHGLLLAGLLALPMNVLA). Residues 19-246 (HPAEQHASNV…VHNVVDYVAS (228 aa)) constitute a propeptide that is removed on maturation. Asn-410 carries N-linked (GlcNAc...) asparagine glycosylation. His-429 provides a ligand contact to Zn(2+). Residue Glu-430 is part of the active site. Zn(2+) is bound at residue His-433. 2 N-linked (GlcNAc...) asparagine glycosylation sites follow: Asn-480 and Asn-622.

This sequence belongs to the peptidase M36 family. Zn(2+) is required as a cofactor.

It localises to the secreted. In terms of biological role, secreted metalloproteinase probably acting as a virulence factor. This Trichophyton tonsurans (Scalp ringworm fungus) protein is Extracellular metalloproteinase 3 (MEP3).